A 170-amino-acid chain; its full sequence is Protein SprT (170 aa).

In terms of domain architecture, SprT-like spans 22–165; sequence LQLANQHLGT…RQCGEKLQFI (144 aa). H78 contacts Zn(2+). The active site involves E79. H82 contributes to the Zn(2+) binding site.

This sequence belongs to the SprT family. Zn(2+) serves as cofactor.

The protein localises to the cytoplasm. The sequence is that of Protein SprT from Yersinia pseudotuberculosis serotype O:1b (strain IP 31758).